The chain runs to 329 residues: NADH-quinone oxidoreductase subunit H 2 (329 aa).

Helical transmembrane passes span 12-32, 78-98, 120-140, 159-179, 191-211, 242-262, 270-290, and 309-329; these read GAKI…LVFA, WLFY…FAVI, VGLL…ALGG, LISY…LAGS, GVWF…SIAA, LFFV…TTFF, LLPP…FFIW, and KVLT…LMFV.

This sequence belongs to the complex I subunit 1 family. As to quaternary structure, NDH-1 is composed of 14 different subunits. Subunits NuoA, H, J, K, L, M, N constitute the membrane sector of the complex.

It is found in the cell inner membrane. The enzyme catalyses a quinone + NADH + 5 H(+)(in) = a quinol + NAD(+) + 4 H(+)(out). Functionally, NDH-1 shuttles electrons from NADH, via FMN and iron-sulfur (Fe-S) centers, to quinones in the respiratory chain. The immediate electron acceptor for the enzyme in this species is believed to be ubiquinone. Couples the redox reaction to proton translocation (for every two electrons transferred, four hydrogen ions are translocated across the cytoplasmic membrane), and thus conserves the redox energy in a proton gradient. This subunit may bind ubiquinone. The chain is NADH-quinone oxidoreductase subunit H 2 from Geobacter sulfurreducens (strain ATCC 51573 / DSM 12127 / PCA).